The primary structure comprises 474 residues: MSSPNTWSIGSSVYSPVFSQKMTLWILLLLSLYPGFTSQKSDDDYEDYASNKTWVLTPKVPEGDVTVILNNLLEGYDNKLRPDIGVKPTLIHTDMYVNSIGPVNAINMEYTIDIFFAQTWYDRRLKFNSTIKVLRLNSNMVGKIWIPDTFFRNSKKADAHWITTPNRMLRIWNDGRVLYTLRLTIDAECQLQLHNFPMDEHSCPLEFSSYGYPREEIVYQWKRSSVEVGDTRSWRLYQFSFVGLRNTTEVVKTTSGDYVVMSVYFDLSRRMGYFTIQTYIPCTLIVVLSWVSFWINKDAVPARTSLGITTVLTMTTLSTIARKSLPKVSYVTAMDLFVSVCFIFVFSALVEYGTLHYFVSNRKPSKDKDKKKKNPLLRMFSFKAPTIDIRPRSATIQMNNATHLQERDEEYGYECLDGKDCASFFCCFEDCRTGAWRHGRIHIRIAKMDSYARIFFPTAFCLFNLVYWVSYLYL.

Positions 1–38 (MSSPNTWSIGSSVYSPVFSQKMTLWILLLLSLYPGFTS) are cleaved as a signal peptide. The Extracellular segment spans residues 39 to 274 (QKSDDDYEDY…FDLSRRMGYF (236 aa)). Asparagine 51 and asparagine 128 each carry an N-linked (GlcNAc...) asparagine glycan. The cysteines at positions 189 and 203 are disulfide-linked. N-linked (GlcNAc...) asparagine glycosylation occurs at asparagine 246. The chain crosses the membrane as a helical span at residues 275-295 (TIQTYIPCTLIVVLSWVSFWI). Residues 296–301 (NKDAVP) are Cytoplasmic-facing. Residues 302–321 (ARTSLGITTVLTMTTLSTIA) form a helical membrane-spanning segment. The Extracellular segment spans residues 322-333 (RKSLPKVSYVTA). A helical membrane pass occupies residues 334–358 (MDLFVSVCFIFVFSALVEYGTLHYF). The Cytoplasmic segment spans residues 359-450 (VSNRKPSKDK…IHIRIAKMDS (92 aa)). A Phosphoserine; by PKC modification is found at serine 381. A helical transmembrane segment spans residues 451 to 472 (YARIFFPTAFCLFNLVYWVSYL). The Extracellular segment spans residues 473–474 (YL).

This sequence belongs to the ligand-gated ion channel (TC 1.A.9) family. Gamma-aminobutyric acid receptor (TC 1.A.9.5) subfamily. GABRG2 sub-subfamily. In terms of assembly, heteropentamer, formed by a combination of alpha (GABRA1-6), beta (GABRB1-3), gamma (GABRG1-3), delta (GABRD), epsilon (GABRE), rho (GABRR1-3), pi (GABRP) and theta (GABRQ) chains, each subunit exhibiting distinct physiological and pharmacological properties. Interacts with GABARAP. Interacts with KIF21B. Identified in a complex of 720 kDa composed of LHFPL4, NLGN2, GABRA1, GABRB2, GABRG2 and GABRB3. Interacts with LHFPL4. Interacts with SHISA7; interaction leads to the regulation of GABA(A) receptor trafficking, channel deactivation kinetics and pharmacology. Post-translationally, glycosylated. In terms of processing, palmitoylated by ZDHHC3/GODZ; required for the accumulation of GABA(A) receptors at the postsynaptic membrane of inhibitory GABAergic synapses. As to expression, expressed in brain neurons (at protein level).

Its subcellular location is the postsynaptic cell membrane. The protein resides in the cell membrane. It is found in the cell projection. It localises to the dendrite. The protein localises to the cytoplasmic vesicle membrane. The catalysed reaction is chloride(in) = chloride(out). Its activity is regulated as follows. Allosterically activated by benzodiazepines. Activated by pentobarbital. Inhibited by the antagonist bicuculline. Inhibited by zinc ions. Potentiated by histamine. Functionally, gamma subunit of the heteropentameric ligand-gated chloride channel gated by gamma-aminobutyric acid (GABA), a major inhibitory neurotransmitter in the brain. GABA-gated chloride channels, also named GABA(A) receptors (GABAAR), consist of five subunits arranged around a central pore and contain GABA active binding site(s) located at the alpha and beta subunit interface(s). When activated by GABA, GABAARs selectively allow the flow of chloride anions across the cell membrane down their electrochemical gradient. Gamma-2/GABRG2-containing GABAARs are found at both synaptic and extrasynaptic sites. Chloride influx into the postsynaptic neuron following GABAAR opening decreases the neuron ability to generate a new action potential, thereby reducing nerve transmission. GABAARs containing alpha-1 and beta-2 or -3 subunits exhibit synaptogenic activity; the gamma-2 subunit being necessary but not sufficient to induce rapid synaptic contacts formation. Extrasynaptic gamma-2-containing receptors contribute to the tonic GABAergic inhibition. GABAARs function also as histamine receptor where histamine binds at the interface of two neighboring beta subunits and potentiates GABA response in a gamma-2 subunit-controlled manner. This Mus musculus (Mouse) protein is Gamma-aminobutyric acid receptor subunit gamma-2.